A 215-amino-acid polypeptide reads, in one-letter code: Pyrrolidone-carboxylate peptidase (215 aa).

Active-site residues include Glu80, Cys143, and His167.

The protein belongs to the peptidase C15 family. As to quaternary structure, homotetramer.

The protein resides in the cytoplasm. It catalyses the reaction Release of an N-terminal pyroglutamyl group from a polypeptide, the second amino acid generally not being Pro.. In terms of biological role, removes 5-oxoproline from various penultimate amino acid residues except L-proline. The protein is Pyrrolidone-carboxylate peptidase of Yersinia pseudotuberculosis serotype O:1b (strain IP 31758).